The primary structure comprises 452 residues: Isocitrate dehydrogenase [NADP], mitochondrial (452 aa).

The N-terminal 39 residues, 1–39 (MAGYLRVVRSLCRASGSRPAWAPAALTAPTSQEQTRRHY), are a transit peptide targeting the mitochondrion. 4 positions are modified to N6-acetyllysine: lysine 45, lysine 48, lysine 67, and lysine 69. Lysine 80 and lysine 106 each carry N6-acetyllysine; alternate. Residues lysine 80 and lysine 106 each carry the N6-succinyllysine; alternate modification. NADP(+) is bound by residues 115-117 (TIT) and arginine 122. A substrate-binding site is contributed by threonine 117. Residues 134 to 140 (SPNGTIR) and arginine 149 contribute to the substrate site. N6-acetyllysine is present on lysine 155. Lysine 166 is subject to N6-acetyllysine; alternate. Residue lysine 166 is modified to N6-succinyllysine; alternate. Arginine 172 serves as a coordination point for substrate. N6-acetyllysine; alternate is present on residues lysine 180 and lysine 193. Residues lysine 180 and lysine 193 each carry the N6-succinyllysine; alternate modification. Lysine 199 bears the N6-acetyllysine mark. Lysine 256 is modified (N6-acetyllysine; alternate). Residue lysine 256 is modified to N6-succinyllysine; alternate. Lysine 263, lysine 272, lysine 275, and lysine 280 each carry N6-acetyllysine. N6-acetyllysine; alternate is present on lysine 282. An N6-succinyllysine; alternate modification is found at lysine 282. Aspartate 291 lines the Mn(2+) pocket. Lysine 299 contacts NADP(+). Aspartate 314 contacts Mn(2+). NADP(+) contacts are provided by residues 349 to 354 (GTVTRH) and asparagine 367. Position 384 is an N6-acetyllysine; alternate (lysine 384). Lysine 384 carries the N6-succinyllysine; alternate modification. Residues lysine 400, lysine 413, and lysine 442 each carry the N6-acetyllysine modification.

It belongs to the isocitrate and isopropylmalate dehydrogenases family. Homodimer. Mg(2+) serves as cofactor. Mn(2+) is required as a cofactor. In terms of processing, acetylation at Lys-413 dramatically reduces catalytic activity. Deacetylated by SIRT3.

The protein localises to the mitochondrion. It carries out the reaction D-threo-isocitrate + NADP(+) = 2-oxoglutarate + CO2 + NADPH. In terms of biological role, plays a role in intermediary metabolism and energy production. It may tightly associate or interact with the pyruvate dehydrogenase complex. This Macaca fascicularis (Crab-eating macaque) protein is Isocitrate dehydrogenase [NADP], mitochondrial (IDH2).